A 471-amino-acid polypeptide reads, in one-letter code: Putative metabolite transport protein YncC (471 aa).

12 helical membrane-spanning segments follow: residues 13–33 (LIMISATFGGLLFGYDTGVIN), 50–70 (VTEGLVTSILLLGAAFGALLC), 88–108 (FLFFLASLGTALAPNVFIMAV), 111–131 (FLLGLAVGGASAMVPAFLAEM), 146–166 (LMIVGGQFLAYVFNAILGVTM), 175–195 (YMLVICAVPAIMLFASMLKVP), 256–276 (LLWIGIGVAIVNQITGVNSIM), 295–315 (IANIGNGLISVIAVIFGIWLV), 323–343 (ILLIGLAGTTTALLLIAIFSI), 358–378 (LTVLFLAFMQGCVGPVTWLVI), 393–413 (ISVFFLWILNFVIGFAFPILL), and 416–436 (VGLSFTFFIFVALGVLAIGFV).

The protein belongs to the major facilitator superfamily. Sugar transporter (TC 2.A.1.1) family.

The protein resides in the cell membrane. This chain is Putative metabolite transport protein YncC (yncC), found in Bacillus subtilis (strain 168).